We begin with the raw amino-acid sequence, 235 residues long: NADH-quinone oxidoreductase subunit B 2 (235 aa).

Residues 1-14 (MGLTSRPTPASRQP) show a composition bias toward low complexity. The tract at residues 1 to 24 (MGLTSRPTPASRQPASPPPADPVL) is disordered. C63, C64, C129, and C159 together coordinate [4Fe-4S] cluster. The interval 188 to 235 (TGATGGGPSTDALRSGLVAAPTAPGPTAPASTAPGPTAPAPTQDEERR) is disordered.

Belongs to the complex I 20 kDa subunit family. NDH-1 is composed of 14 different subunits. Subunits NuoB, C, D, E, F, and G constitute the peripheral sector of the complex. The cofactor is [4Fe-4S] cluster.

It localises to the cell membrane. The enzyme catalyses a quinone + NADH + 5 H(+)(in) = a quinol + NAD(+) + 4 H(+)(out). Functionally, NDH-1 shuttles electrons from NADH, via FMN and iron-sulfur (Fe-S) centers, to quinones in the respiratory chain. The immediate electron acceptor for the enzyme in this species is believed to be a menaquinone. Couples the redox reaction to proton translocation (for every two electrons transferred, four hydrogen ions are translocated across the cytoplasmic membrane), and thus conserves the redox energy in a proton gradient. This is NADH-quinone oxidoreductase subunit B 2 from Streptomyces griseus subsp. griseus (strain JCM 4626 / CBS 651.72 / NBRC 13350 / KCC S-0626 / ISP 5235).